Here is a 390-residue protein sequence, read N- to C-terminus: Two-component response regulator ORR29 (390 aa).

Positions 13–130 constitute a Response regulatory domain; the sequence is SAMVIDEDKC…TIKNLWQYVD (118 aa). D65 carries the post-translational modification 4-aspartylphosphate. Residues 169–226 constitute a DNA-binding region (myb-like GARP); the sequence is KKYYLMWTPHLQKKFLHALQILGKDASPKNIKKIMGVDNIDCRQIAAHLQKHRLRLTK. Disordered regions lie at residues 233–271 and 303–339; these read FTTD…QPTE and SKHS…SGDH. The span at 257 to 271 shows a compositional bias: polar residues; that stretch reads NASTLQPRSNTQPTE.

This sequence belongs to the ARR family. Type-B subfamily. Post-translationally, two-component system major event consists of a His-to-Asp phosphorelay between a sensor histidine kinase (HK) and a response regulator (RR). In plants, the His-to-Asp phosphorelay involves an additional intermediate named Histidine-containing phosphotransfer protein (HPt). This multistep phosphorelay consists of a His-Asp-His-Asp sequential transfer of a phosphate group between first a His and an Asp of the HK protein, followed by the transfer to a conserved His of the HPt protein and finally the transfer to an Asp in the receiver domain of the RR protein.

It is found in the nucleus. Its function is as follows. Transcriptional activator that binds specific DNA sequence. Functions as a response regulator involved in His-to-Asp phosphorelay signal transduction system. Phosphorylation of the Asp residue in the receiver domain activates the ability of the protein to promote the transcription of target genes. May directly activate some type-A response regulators in response to cytokinins. The protein is Two-component response regulator ORR29 of Oryza sativa subsp. indica (Rice).